Reading from the N-terminus, the 319-residue chain is Cytochrome c biogenesis protein CcsA (319 aa).

Helical transmembrane passes span 9–29, 44–64, 71–91, 143–163, 225–245, 259–273, and 286–306; these read ILTH…LITL, GVIG…AYSG, LYES…FPYL, MVLG…LLVI, IISL…VWAN, TWAF…IYLH, and AIVA…VNLL.

This sequence belongs to the CcmF/CycK/Ccl1/NrfE/CcsA family. May interact with Ccs1.

Its subcellular location is the plastid. It is found in the chloroplast thylakoid membrane. Required during biogenesis of c-type cytochromes (cytochrome c6 and cytochrome f) at the step of heme attachment. In Oenothera parviflora (Small-flowered evening primrose), this protein is Cytochrome c biogenesis protein CcsA.